We begin with the raw amino-acid sequence, 315 residues long: Mitochondrial outer membrane import complex protein METAXIN (315 aa).

N-acetylmethionine is present on Met1. The stretch at 157 to 181 (ENAEQREKQIYKRASEAYEALSTRL) forms a coiled coil. The chain crosses the membrane as a helical span at residues 195–215 (LDAFLLSHILFIIQALPVTSV). The segment at 240-277 (ASSSSPSPPLHSFPSSFPRKSSKPKSKPKVEKTEEEKK) is disordered. A compositionally biased stretch (basic and acidic residues) spans 267–277 (PKVEKTEEEKK). The helical transmembrane segment at 284-304 (FFLAAQFLAVVIYVSVMGGGS) threads the bilayer.

Belongs to the metaxin family. In terms of assembly, part of a high molecular weight complex that is distinct from the TOM complex. Interacts with a variety of mitochondrial precursor proteins. As to expression, expressed in roots, young cotyledons, flowers and leaves.

The protein localises to the mitochondrion inner membrane. It is found in the mitochondrion outer membrane. Functionally, involved in transport of proteins into the mitochondrion. This is Mitochondrial outer membrane import complex protein METAXIN (MTX1) from Arabidopsis thaliana (Mouse-ear cress).